A 47-amino-acid chain; its full sequence is Photosystem II reaction center protein K (47 aa).

The propeptide occupies 1 to 10 (MAVYTLDLLA). The chain crosses the membrane as a helical span at residues 19–39 (FGPLIDILPIIPLFFLLLAFV).

This sequence belongs to the PsbK family. PSII is composed of 1 copy each of membrane proteins PsbA, PsbB, PsbC, PsbD, PsbE, PsbF, PsbH, PsbI, PsbJ, PsbK, PsbL, PsbM, PsbT, PsbX, PsbY, PsbZ, Psb30/Ycf12, peripheral proteins PsbO, CyanoQ (PsbQ), PsbU, PsbV and a large number of cofactors. It forms dimeric complexes.

It localises to the cellular thylakoid membrane. One of the components of the core complex of photosystem II (PSII). PSII is a light-driven water:plastoquinone oxidoreductase that uses light energy to abstract electrons from H(2)O, generating O(2) and a proton gradient subsequently used for ATP formation. It consists of a core antenna complex that captures photons, and an electron transfer chain that converts photonic excitation into a charge separation. The sequence is that of Photosystem II reaction center protein K from Synechococcus sp. (strain CC9311).